The primary structure comprises 787 residues: DNA ligase (787 aa).

NAD(+) is bound by residues 32-36, 81-82, and Glu121; these read DVEYD and SL. Lys123 (N6-AMP-lysine intermediate) is an active-site residue. Residues Arg144, Glu181, Lys297, and Lys321 each contribute to the NAD(+) site. Residues Cys415, Cys418, Cys445, and Cys451 each coordinate Zn(2+). One can recognise a BRCT domain in the interval 703–787; it reads VEGLPLAGQT…RLIELGVAVD (85 aa).

Belongs to the NAD-dependent DNA ligase family. LigA subfamily. Requires Mg(2+) as cofactor. The cofactor is Mn(2+).

It carries out the reaction NAD(+) + (deoxyribonucleotide)n-3'-hydroxyl + 5'-phospho-(deoxyribonucleotide)m = (deoxyribonucleotide)n+m + AMP + beta-nicotinamide D-nucleotide.. Functionally, DNA ligase that catalyzes the formation of phosphodiester linkages between 5'-phosphoryl and 3'-hydroxyl groups in double-stranded DNA using NAD as a coenzyme and as the energy source for the reaction. It is essential for DNA replication and repair of damaged DNA. In Pseudomonas syringae pv. syringae (strain B728a), this protein is DNA ligase.